The primary structure comprises 381 residues: 1-deoxy-D-xylulose 5-phosphate reductoisomerase (381 aa).

Residues Thr-10, Gly-11, Ser-12, Ile-13, Gly-36, Lys-37, Asn-38, and Asn-120 each contribute to the NADPH site. Residue Lys-121 coordinates 1-deoxy-D-xylulose 5-phosphate. Glu-122 contributes to the NADPH binding site. Residue Asp-146 participates in Mn(2+) binding. Residues Ser-147, Glu-148, Ser-172, and His-195 each coordinate 1-deoxy-D-xylulose 5-phosphate. Glu-148 is a binding site for Mn(2+). Position 201 (Gly-201) interacts with NADPH. 1-deoxy-D-xylulose 5-phosphate-binding residues include Ser-208, Asn-213, Lys-214, and Glu-217. Residue Glu-217 coordinates Mn(2+).

The protein belongs to the DXR family. The cofactor is Mg(2+). Requires Mn(2+) as cofactor.

The enzyme catalyses 2-C-methyl-D-erythritol 4-phosphate + NADP(+) = 1-deoxy-D-xylulose 5-phosphate + NADPH + H(+). It functions in the pathway isoprenoid biosynthesis; isopentenyl diphosphate biosynthesis via DXP pathway; isopentenyl diphosphate from 1-deoxy-D-xylulose 5-phosphate: step 1/6. Catalyzes the NADPH-dependent rearrangement and reduction of 1-deoxy-D-xylulose-5-phosphate (DXP) to 2-C-methyl-D-erythritol 4-phosphate (MEP). The sequence is that of 1-deoxy-D-xylulose 5-phosphate reductoisomerase from Lysinibacillus sphaericus (strain C3-41).